We begin with the raw amino-acid sequence, 356 residues long: sn-glycerol-3-phosphate import ATP-binding protein UgpC (356 aa).

One can recognise an ABC transporter domain in the interval 4 to 235; that stretch reads LKLQAVTKSW…PASRFVASFI (232 aa). An ATP-binding site is contributed by 37–44; that stretch reads GPSGCGKS.

It belongs to the ABC transporter superfamily. sn-glycerol-3-phosphate importer (TC 3.A.1.1.3) family. As to quaternary structure, the complex is composed of two ATP-binding proteins (UgpC), two transmembrane proteins (UgpA and UgpE) and a solute-binding protein (UgpB).

Its subcellular location is the cell inner membrane. It catalyses the reaction sn-glycerol 3-phosphate(out) + ATP + H2O = sn-glycerol 3-phosphate(in) + ADP + phosphate + H(+). Its function is as follows. Part of the ABC transporter complex UgpBAEC involved in sn-glycerol-3-phosphate (G3P) import. Responsible for energy coupling to the transport system. The chain is sn-glycerol-3-phosphate import ATP-binding protein UgpC from Salmonella typhi.